The sequence spans 1040 residues: Multidrug resistance protein MdtB (1040 aa).

Helical transmembrane passes span 25 to 45 (LLMAAILLAGIIGYRFLPVAA), 347 to 367 (LMLAIALVVMIIYLFLRNIPA), 369 to 389 (IIPGVAVPLSLIGTFAVMVFL), 396 to 416 (LTLMALTIATGFVVDDAIVVI), 440 to 460 (IGFTIISLTFSLIAVLIPLLF), 472 to 492 (FAVTLAVAILISAVVSLTLTP), 537 to 557 (WLTLSVAFATLLLSIMLWIVI), 863 to 883 (LGSTVWLIVAAVVAMYIVLGV), 888 to 908 (FIHPITILSTLPTAGVGALLA), 910 to 930 (IIAGSELDIIAIIGIILLIGI), 968 to 988 (ILMTTLAALLGALPLMLSTGV), and 998 to 1018 (IAMVGGLLVSQVLTLFTTPVI).

It belongs to the resistance-nodulation-cell division (RND) (TC 2.A.6) family. MdtB subfamily. As to quaternary structure, part of a tripartite efflux system composed of MdtA, MdtB and MdtC. MdtB forms a heteromultimer with MdtC.

The protein localises to the cell inner membrane. The sequence is that of Multidrug resistance protein MdtB from Salmonella newport (strain SL254).